The chain runs to 483 residues: Bifunctional protein HldE (483 aa).

The ribokinase stretch occupies residues 1 to 327 (MDDALAHLPR…ACASSAQGEP (327 aa)). Position 201 to 204 (201 to 204 (NRKE)) interacts with ATP. Residue Asp272 is part of the active site. Residues 354 to 483 (FTNGCFDLLH…TTNLIARMNS (130 aa)) are cytidylyltransferase.

The protein in the N-terminal section; belongs to the carbohydrate kinase PfkB family. It in the C-terminal section; belongs to the cytidylyltransferase family. As to quaternary structure, homodimer.

The catalysed reaction is D-glycero-beta-D-manno-heptose 7-phosphate + ATP = D-glycero-beta-D-manno-heptose 1,7-bisphosphate + ADP + H(+). It carries out the reaction D-glycero-beta-D-manno-heptose 1-phosphate + ATP + H(+) = ADP-D-glycero-beta-D-manno-heptose + diphosphate. The protein operates within nucleotide-sugar biosynthesis; ADP-L-glycero-beta-D-manno-heptose biosynthesis; ADP-L-glycero-beta-D-manno-heptose from D-glycero-beta-D-manno-heptose 7-phosphate: step 1/4. It functions in the pathway nucleotide-sugar biosynthesis; ADP-L-glycero-beta-D-manno-heptose biosynthesis; ADP-L-glycero-beta-D-manno-heptose from D-glycero-beta-D-manno-heptose 7-phosphate: step 3/4. Catalyzes the phosphorylation of D-glycero-D-manno-heptose 7-phosphate at the C-1 position to selectively form D-glycero-beta-D-manno-heptose-1,7-bisphosphate. Functionally, catalyzes the ADP transfer from ATP to D-glycero-beta-D-manno-heptose 1-phosphate, yielding ADP-D-glycero-beta-D-manno-heptose. In Caulobacter vibrioides (strain ATCC 19089 / CIP 103742 / CB 15) (Caulobacter crescentus), this protein is Bifunctional protein HldE.